Consider the following 122-residue polypeptide: Large ribosomal subunit protein uL14 (122 aa).

The protein belongs to the universal ribosomal protein uL14 family. Part of the 50S ribosomal subunit. Forms a cluster with proteins L3 and L19. In the 70S ribosome, L14 and L19 interact and together make contacts with the 16S rRNA in bridges B5 and B8.

Its function is as follows. Binds to 23S rRNA. Forms part of two intersubunit bridges in the 70S ribosome. This chain is Large ribosomal subunit protein uL14, found in Lactobacillus acidophilus (strain ATCC 700396 / NCK56 / N2 / NCFM).